The chain runs to 338 residues: Nicotinate-nucleotide--dimethylbenzimidazole phosphoribosyltransferase (338 aa).

Residue Glu305 is the Proton acceptor of the active site.

The protein belongs to the CobT family.

It carries out the reaction 5,6-dimethylbenzimidazole + nicotinate beta-D-ribonucleotide = alpha-ribazole 5'-phosphate + nicotinate + H(+). The protein operates within nucleoside biosynthesis; alpha-ribazole biosynthesis; alpha-ribazole from 5,6-dimethylbenzimidazole: step 1/2. Catalyzes the synthesis of alpha-ribazole-5'-phosphate from nicotinate mononucleotide (NAMN) and 5,6-dimethylbenzimidazole (DMB). The protein is Nicotinate-nucleotide--dimethylbenzimidazole phosphoribosyltransferase of Sinorhizobium fredii (strain NBRC 101917 / NGR234).